Here is a 267-residue protein sequence, read N- to C-terminus: Kit ligand (267 aa).

The first 25 residues, 1–25, serve as a signal peptide directing secretion; it reads MKKTQTWIITCIYLQLLLFNPLVHT. At Gln26 the chain carries Pyrrolidone carboxylic acid. The Extracellular portion of the chain corresponds to 26 to 215; that stretch reads QGICRNRVTD…SNSIEDSSLQ (190 aa). 2 disulfide bridges follow: Cys29/Cys114 and Cys68/Cys164. Residues Asn90, Asn97, Asn145, and Asn196 are each glycosylated (N-linked (GlcNAc...) asparagine). Residues 216-238 traverse the membrane as a helical segment; the sequence is WAAVALPAFFSLVIGFAFGALYW. Topologically, residues 239–267 are cytoplasmic; it reads KKKQPNLTRTVENRQINEEDNEISMLQEK.

It belongs to the SCF family. As to quaternary structure, homodimer, non-covalently linked. Heterotetramer with KIT, binding two KIT molecules; thereby mediates KIT dimerization and subsequent activation by autophosphorylation. Post-translationally, a soluble form is produced by proteolytic processing of the extracellular domain.

It is found in the cytoplasm. The protein localises to the cytoskeleton. The protein resides in the cell membrane. It localises to the cell projection. Its subcellular location is the lamellipodium. It is found in the filopodium. The protein localises to the secreted. Ligand for the receptor-type protein-tyrosine kinase KIT. Plays an essential role in the regulation of cell survival and proliferation, hematopoiesis, stem cell maintenance, gametogenesis, mast cell development, migration and function, and in melanogenesis. KITLG/SCF binding can activate several signaling pathways. Promotes phosphorylation of PIK3R1, the regulatory subunit of phosphatidylinositol 3-kinase, and subsequent activation of the kinase AKT1. KITLG/SCF and KIT also transmit signals via GRB2 and activation of RAS, RAF1 and the MAP kinases MAPK1/ERK2 and/or MAPK3/ERK1. KITLG/SCF and KIT promote activation of STAT family members STAT1, STAT3 and STAT5. KITLG/SCF and KIT promote activation of PLCG1, leading to the production of the cellular signaling molecules diacylglycerol and inositol 1,4,5-trisphosphate. KITLG/SCF acts synergistically with other cytokines, probably interleukins. This is Kit ligand (KITLG) from Ovis aries (Sheep).